The following is an 88-amino-acid chain: Otospiralin (88 aa).

A signal peptide spans 1–21 (MQACMVPGLALCLLLGSLTEA).

Belongs to the otospiralin family. Ear specific.

The protein localises to the secreted. Its function is as follows. May be essential for the survival of the neurosensory epithelium of the inner ear. In Cavia porcellus (Guinea pig), this protein is Otospiralin (OTOS).